Consider the following 400-residue polypeptide: MRFVDEAVITVEAGDGGNGVASFRREKFVPFGGPDGGDGGRGGSVYIQADDDTGTLVDYRYTRKFRAERGKNGAGANCTGRGGEDVVLKVPVGTTIVDVESGDIIGDLVEDGQRVMVATGGDGGLGNTHFKSSTNRSPRKFTTGVKGEFREIRLELKVLADVGLLGMPNAGKSTFIRAVSAAKPKVADYPFTTMVPNLGVVDADRHRSFVMADIPGLIEGAAEGAGLGIRFLKHLARTRILLHIVDVQPIDGSDPVHNAKAIVGELKKFSPTLAELPVVLVLNKLDQIDEANREEWCQHILTELEWTGPVFRTSGLLLEGTKEVVYYLMDQIEQQRELEAEDPEYARKVKAFREQLEAETREQTIAAKEAYRAMRKAQREADQDDDFDDDDDEVEVIYVR.

Residues M1–L159 form the Obg domain. Residues A160–E333 enclose the OBG-type G domain. Residues G166–S173, F191–V195, D213–G216, N283–D286, and S314–L316 each bind GTP. S173 and T193 together coordinate Mg(2+).

This sequence belongs to the TRAFAC class OBG-HflX-like GTPase superfamily. OBG GTPase family. Monomer. It depends on Mg(2+) as a cofactor.

Its subcellular location is the cytoplasm. Its function is as follows. An essential GTPase which binds GTP, GDP and possibly (p)ppGpp with moderate affinity, with high nucleotide exchange rates and a fairly low GTP hydrolysis rate. Plays a role in control of the cell cycle, stress response, ribosome biogenesis and in those bacteria that undergo differentiation, in morphogenesis control. The chain is GTPase Obg from Acinetobacter baylyi (strain ATCC 33305 / BD413 / ADP1).